A 142-amino-acid polypeptide reads, in one-letter code: Hemoglobin subunit alpha-A (142 aa).

The region spanning 2-142 is the Globin domain; the sequence is VLSAADKTNV…VATVLTAKYR (141 aa). O2 is bound at residue histidine 59. Histidine 88 serves as a coordination point for heme b.

The protein belongs to the globin family. In terms of assembly, heterotetramer of two alpha chains and two beta chains. In terms of tissue distribution, red blood cells.

In terms of biological role, involved in oxygen transport from the lung to the various peripheral tissues. The polypeptide is Hemoglobin subunit alpha-A (HBAA) (Apus apus (Common swift)).